We begin with the raw amino-acid sequence, 338 residues long: tRNA-specific 2-thiouridylase MnmA (338 aa).

Residues 6–13 and M32 each bind ATP; that span reads AMSGGVDS. The Nucleophile role is filled by C92. A disulfide bond links C92 and C186. ATP is bound at residue G116. The segment at 134–136 is interaction with tRNA; it reads KDQ. Residue C186 is the Cysteine persulfide intermediate of the active site. The interaction with tRNA stretch occupies residues 288–289; the sequence is RY.

The protein belongs to the MnmA/TRMU family.

It localises to the cytoplasm. The catalysed reaction is S-sulfanyl-L-cysteinyl-[protein] + uridine(34) in tRNA + AH2 + ATP = 2-thiouridine(34) in tRNA + L-cysteinyl-[protein] + A + AMP + diphosphate + H(+). Functionally, catalyzes the 2-thiolation of uridine at the wobble position (U34) of tRNA, leading to the formation of s(2)U34. The protein is tRNA-specific 2-thiouridylase MnmA of Campylobacter jejuni subsp. jejuni serotype O:2 (strain ATCC 700819 / NCTC 11168).